Here is a 259-residue protein sequence, read N- to C-terminus: Snake venom serine proteinase 2 (259 aa).

A signal peptide spans 1 to 18 (MVLIRVLANLLILQLSYA). A propeptide spanning residues 19-24 (QKSSEL) is cleaved from the precursor. The Peptidase S1 domain maps to 25 to 250 (IFGGRPCNRN…HLDWIQSIIA (226 aa)). Disulfide bonds link C31/C162, C49/C65, C97/C257, C141/C211, C173/C190, and C201/C226. Active-site charge relay system residues include H64 and D109. S205 (charge relay system) is an active-site residue.

It belongs to the peptidase S1 family. Snake venom subfamily. Monomer. In terms of tissue distribution, expressed by the venom gland.

It is found in the secreted. Snake venom serine protease that may act in the hemostasis system of the prey. This Crotalus adamanteus (Eastern diamondback rattlesnake) protein is Snake venom serine proteinase 2.